Here is a 66-residue protein sequence, read N- to C-terminus: Large ribosomal subunit protein bL35 (66 aa).

The interval 25 to 45 (QAAGKRHGMSKRPQKMKRNAR) is disordered. Basic residues predominate over residues 28 to 44 (GKRHGMSKRPQKMKRNA).

It belongs to the bacterial ribosomal protein bL35 family.

This Rhodospirillum centenum (strain ATCC 51521 / SW) protein is Large ribosomal subunit protein bL35.